The sequence spans 1181 residues: HEAT repeat-containing protein 6 (1181 aa).

An HEAT 1 repeat occupies 159–198; it reads PELLGNTGLLMKLSDLAQSDPEVRRAAVHCMANLCLSVPG. Disordered regions lie at residues 292–347 and 371–390; these read QYDG…PVTG and LDGS…SSSS. The span at 300–312 shows a compositional bias: polar residues; that stretch reads KPQQSESSASRPT. The span at 313–325 shows a compositional bias: basic residues; the sequence is LNKKKKSKVKPKK. Ser336 and Ser337 each carry phosphoserine. Residues Ser399 and Ser402 each carry the phosphoserine modification. HEAT repeat units follow at residues 452–490, 515–552, and 558–595; these read ELGS…GSKQ, SIRE…NAPY, and SLLT…THAP. Residues 613 to 646 form a disordered region; sequence NSNSATPHLSPPDWWKKAPAGPSLEETSVSSPKG. Position 618 is a phosphothreonine (Thr618). A compositionally biased stretch (polar residues) spans 637–646; sequence EETSVSSPKG. Ser643 carries the post-translational modification Phosphoserine.

As to expression, amplified in breast cancer cell lines MCF-7 and BT-474.

In terms of biological role, amplification-dependent oncogene. In Homo sapiens (Human), this protein is HEAT repeat-containing protein 6 (HEATR6).